We begin with the raw amino-acid sequence, 753 residues long: Probable tubulin--tyrosine ligase PBY1 (753 aa).

Residues 343–734 (MEYIYKPLTH…PIFNENRNKT (392 aa)) enclose the TTL domain.

The protein belongs to the tubulin--tyrosine ligase family. The cofactor is Mg(2+). K(+) is required as a cofactor.

The protein localises to the cytoplasm. The protein resides in the P-body. The enzyme catalyses C-terminal L-alpha-aminoacyl-L-glutamyl-L-glutamyl-[tubulin] + L-tyrosine + ATP = C-terminal L-alpha-aminoacyl-L-glutamyl-L-glutamyl-L-tyrosyl-[tubulin] + ADP + phosphate + H(+). Probable P-body-associated tubulin--tyrosine ligase. In Saccharomyces cerevisiae (strain ATCC 204508 / S288c) (Baker's yeast), this protein is Probable tubulin--tyrosine ligase PBY1 (PBY1).